We begin with the raw amino-acid sequence, 340 residues long: Methionine import ATP-binding protein MetN (340 aa).

The ABC transporter domain occupies 8–246 (ISVKNLNKEI…PYSSITEELF (239 aa)). ATP is bound at residue 40-47 (GHSGSGKS).

It belongs to the ABC transporter superfamily. Methionine importer (TC 3.A.1.24) family. In terms of assembly, the complex is composed of two ATP-binding proteins (MetN), two transmembrane proteins (MetI) and a solute-binding protein (MetQ).

It localises to the cell inner membrane. The enzyme catalyses L-methionine(out) + ATP + H2O = L-methionine(in) + ADP + phosphate + H(+). It catalyses the reaction D-methionine(out) + ATP + H2O = D-methionine(in) + ADP + phosphate + H(+). In terms of biological role, part of the ABC transporter complex MetNIQ involved in methionine import. Responsible for energy coupling to the transport system. This is Methionine import ATP-binding protein MetN from Chlamydia felis (strain Fe/C-56) (Chlamydophila felis).